Consider the following 121-residue polypeptide: Large ribosomal subunit protein bL12 (121 aa).

It belongs to the bacterial ribosomal protein bL12 family. In terms of assembly, homodimer. Part of the ribosomal stalk of the 50S ribosomal subunit. Forms a multimeric L10(L12)X complex, where L10 forms an elongated spine to which 2 to 4 L12 dimers bind in a sequential fashion. Binds GTP-bound translation factors.

In terms of biological role, forms part of the ribosomal stalk which helps the ribosome interact with GTP-bound translation factors. Is thus essential for accurate translation. The chain is Large ribosomal subunit protein bL12 from Mesomycoplasma hyopneumoniae (strain 232) (Mycoplasma hyopneumoniae).